Here is a 442-residue protein sequence, read N- to C-terminus: Vacuolar zinc transporter ZRC1 (442 aa).

Over 1 to 8 the chain is Cytoplasmic; it reads MITGKELR. The helical transmembrane segment at 9–29 threads the bilayer; that stretch reads IISLLTLDTVFFLLEITIGYM. Residues 30–32 lie on the Vacuolar side of the membrane; that stretch reads SHS. A helical membrane pass occupies residues 33–53; sequence LALIADSFHMLNDIISLLVAL. The Cytoplasmic portion of the chain corresponds to 54 to 75; sequence WAVDVAKNRGPDAKYTYGWKRA. Residues 76-96 traverse the membrane as a helical segment; that stretch reads EILGALINAVFLIALCFSIMI. Topologically, residues 97–112 are vacuolar; that stretch reads EALQRLIEPQEIQNPR. Residues 113 to 133 form a helical membrane-spanning segment; sequence LVLYVGVAGLISNVVGLFLFH. Residues 134–235 lie on the Cytoplasmic side of the membrane; the sequence is DHGSDSLHSH…GHRSLNMHGV (102 aa). 3 short sequence motifs (histidine repeat) span residues 141–145, 163–167, and 216–220; these read HSHSH and HDHSH. 2 disordered regions span residues 141-170 and 208-227; these read HSHSHGSVESGNNDLDIESNATHSHSHASL and QPLLNHDDHDHSHESKKPGH. The span at 149–170 shows a compositional bias: polar residues; sequence ESGNNDLDIESNATHSHSHASL. Residues 212–224 show a composition bias toward basic and acidic residues; the sequence is NHDDHDHSHESKK. The helical transmembrane segment at 236 to 256 threads the bilayer; the sequence is FLHVLGDALGNIGVIAAALFI. Over 257-265 the chain is Vacuolar; it reads WKTEYSWRY. Residues 266–286 form a helical membrane-spanning segment; the sequence is YSDPIVSLIITIIIFSSALPL. The Cytoplasmic portion of the chain corresponds to 287–442; that stretch reads SRRASRILLQ…AVNCNTSNCL (156 aa). Residue Lys-357 forms a Glycyl lysine isopeptide (Lys-Gly) (interchain with G-Cter in ubiquitin) linkage. 3 positions are modified to phosphoserine: Ser-387, Ser-393, and Ser-397. The interval 391–419 is disordered; sequence GGSPSSSQEAFDSHGNTEHGRKKRSPTAY.

This sequence belongs to the cation diffusion facilitator (CDF) transporter (TC 2.A.4) family. SLC30A subfamily.

It localises to the vacuole membrane. It carries out the reaction Zn(2+)(in) = Zn(2+)(out). Functionally, vacuolar transporter that regulates zinc homeostasis by mediating zinc transport and storage into the vacuole. ZRC1 senses zinc availability in the cytosol, which might be performed through the histidine repeat motifs, and transports zinc from the cytosol to the vacuole if zinc in cytosol is abundant, conferring resistance to zinc toxicity. Plays a role in resistance to zinc shock resulting from sudden influx of zinc into cytoplasm when ZRT1 and ZRT2 are induced in response to zinc depletion. This Saccharomyces cerevisiae (strain ATCC 204508 / S288c) (Baker's yeast) protein is Vacuolar zinc transporter ZRC1.